A 465-amino-acid chain; its full sequence is Protein hedgehog (465 aa).

Cys-79 carries N-palmitoyl cysteine lipidation. Positions 143, 144, 149, 179, 180, 183, and 185 each coordinate Ca(2+). The Cholesterol glycine ester moiety is linked to residue Gly-251.

Belongs to the hedgehog family. Interacts with shf. In terms of processing, the C-terminal part of the hedgehog protein precursor displays an autoproteolysis activity that results in the cleavage of the full-length protein into two parts (N-product and C-product). In addition, the C-terminal part displays a cholesterol transferase activity that results by the covalent attachment of a cholesterol moiety to the C-terminal of the newly generated N-product. The N-product is the active species in both local and long-range signaling, whereas the C-product has no signaling activity. Cholesterylation is required for N-product targeting to lipid rafts and multimerization. Post-translationally, N-palmitoylation by Rasp of the hedgehog N-product, within the secretory pathway, is required for the embryonic and larval patterning activities of the hedgehog signal.

It localises to the nucleus. The protein localises to the cytoplasm. It is found in the cell membrane. It carries out the reaction glycyl-L-cysteinyl-[protein] + cholesterol + H(+) = [protein]-C-terminal glycyl cholesterol ester + N-terminal L-cysteinyl-[protein]. Its function is as follows. The C-terminal part of the hedgehog protein precursor displays an autoproteolysis activity that results in the cleavage of the full-length protein into two parts (N-product and C-product). In addition, the C-terminal part displays a cholesterol transferase activity that results by the covalent attachment of a cholesterol moiety to the C-terminal of the newly generated N-product. Once cleaved, the C-product has no signaling activity and diffuses from the cell. Functionally, the dually lipidated hedgehog protein N-product is a morphogen which is essential for a variety of patterning events during development. Establishes the anterior-posterior axis of the embryonic segments and patterns the larval imaginal disks. Binds to the patched (ptc) receptor, which functions in association with smoothened (smo), to activate the transcription of target genes wingless (wg), decapentaplegic (dpp) and ptc. In the absence of hh, ptc represses the constitutive signaling activity of smo through fused (fu). Essential component of a signaling pathway which regulates the Duox-dependent gut immune response to bacterial uracil; required to activate Cad99C-dependent endosome formation, norpA-dependent Ca2+ mobilization and p38 MAPK, which are essential steps in the Duox-dependent production of reactive oxygen species (ROS) in response to intestinal bacterial infection. During photoreceptor differentiation, it up-regulates transcription of Ubr3, which in turn promotes the hh-signaling pathway by mediating the ubiquitination and degradation of cos. This chain is Protein hedgehog, found in Drosophila sechellia (Fruit fly).